The primary structure comprises 159 residues: Aspartate carbamoyltransferase regulatory chain (159 aa).

Cys113, Cys118, Cys142, and Cys145 together coordinate Zn(2+).

The protein belongs to the PyrI family. As to quaternary structure, contains catalytic and regulatory chains. Requires Zn(2+) as cofactor.

In terms of biological role, involved in allosteric regulation of aspartate carbamoyltransferase. The protein is Aspartate carbamoyltransferase regulatory chain of Saccharolobus islandicus (strain Y.N.15.51 / Yellowstone #2) (Sulfolobus islandicus).